The following is a 252-amino-acid chain: 5-oxoprolinase subunit A (252 aa).

The protein belongs to the LamB/PxpA family. As to quaternary structure, forms a complex composed of PxpA, PxpB and PxpC.

The enzyme catalyses 5-oxo-L-proline + ATP + 2 H2O = L-glutamate + ADP + phosphate + H(+). Catalyzes the cleavage of 5-oxoproline to form L-glutamate coupled to the hydrolysis of ATP to ADP and inorganic phosphate. The polypeptide is 5-oxoprolinase subunit A (Mycobacterium leprae (strain Br4923)).